A 634-amino-acid chain; its full sequence is 1-deoxy-D-xylulose-5-phosphate synthase (634 aa).

Thiamine diphosphate is bound by residues histidine 72 and 113–115 (GHS). Aspartate 144 serves as a coordination point for Mg(2+). Thiamine diphosphate contacts are provided by residues 145-146 (GA), asparagine 173, tyrosine 284, and glutamate 367. Asparagine 173 is a Mg(2+) binding site.

This sequence belongs to the transketolase family. DXPS subfamily. Homodimer. Mg(2+) is required as a cofactor. Thiamine diphosphate serves as cofactor.

The catalysed reaction is D-glyceraldehyde 3-phosphate + pyruvate + H(+) = 1-deoxy-D-xylulose 5-phosphate + CO2. Its pathway is metabolic intermediate biosynthesis; 1-deoxy-D-xylulose 5-phosphate biosynthesis; 1-deoxy-D-xylulose 5-phosphate from D-glyceraldehyde 3-phosphate and pyruvate: step 1/1. Its function is as follows. Catalyzes the acyloin condensation reaction between C atoms 2 and 3 of pyruvate and glyceraldehyde 3-phosphate to yield 1-deoxy-D-xylulose-5-phosphate (DXP). In Listeria welshimeri serovar 6b (strain ATCC 35897 / DSM 20650 / CCUG 15529 / CIP 8149 / NCTC 11857 / SLCC 5334 / V8), this protein is 1-deoxy-D-xylulose-5-phosphate synthase.